The following is a 236-amino-acid chain: Small ribosomal subunit protein uS2c (236 aa).

Belongs to the universal ribosomal protein uS2 family.

It is found in the plastid. The protein localises to the chloroplast. The protein is Small ribosomal subunit protein uS2c (rps2) of Cucumis sativus (Cucumber).